The following is a 190-amino-acid chain: Protein GrpE (190 aa).

Positions 1–41 are disordered; it reads MAKEKQEEQQKQTAPENEKAPKKDIKKEASDKKGDQTSKLK.

This sequence belongs to the GrpE family. In terms of assembly, homodimer.

It localises to the cytoplasm. Its function is as follows. Participates actively in the response to hyperosmotic and heat shock by preventing the aggregation of stress-denatured proteins, in association with DnaK and GrpE. It is the nucleotide exchange factor for DnaK and may function as a thermosensor. Unfolded proteins bind initially to DnaJ; upon interaction with the DnaJ-bound protein, DnaK hydrolyzes its bound ATP, resulting in the formation of a stable complex. GrpE releases ADP from DnaK; ATP binding to DnaK triggers the release of the substrate protein, thus completing the reaction cycle. Several rounds of ATP-dependent interactions between DnaJ, DnaK and GrpE are required for fully efficient folding. The sequence is that of Protein GrpE from Limosilactobacillus reuteri (strain DSM 20016) (Lactobacillus reuteri).